A 229-amino-acid chain; its full sequence is MFKKMLLVDPKMRKEKQIKKHNMKRHPLSSAGVDDVSMLKSLTKSSINRDIVSKIIKESAGRELQGHEKLQIQSALRDIESAENQARVQQCNAKCISEVMEVGRMAAMATSATLVLVEQSKLSEKKLERSEKVAKRVGKIESLNEKLDLAGGIGTRMYEAVGELTDIFDPSAYSEEKSNGILSTSQERILNEIQAKVQSDVYMNLPSVPLNSTLSLGEAEKSITEKLYL.

Residues 66 to 94 adopt a coiled-coil conformation; sequence GHEKLQIQSALRDIESAENQARVQQCNAK.

This is an uncharacterized protein from Ostreid herpesvirus 1 (isolate France) (OsHV-1).